The chain runs to 124 residues: Fluoride-specific ion channel FluC (124 aa).

The next 4 helical transmembrane spans lie at 4-24 (FVLV…LSGV), 35-55 (YGTV…WGIL), 67-87 (LLLL…TYEG), and 100-120 (ALYI…GAGL). Residues Gly75 and Thr78 each contribute to the Na(+) site.

Belongs to the fluoride channel Fluc/FEX (TC 1.A.43) family.

The protein localises to the cell inner membrane. The catalysed reaction is fluoride(in) = fluoride(out). With respect to regulation, na(+) is not transported, but it plays an essential structural role and its presence is essential for fluoride channel function. Its function is as follows. Fluoride-specific ion channel. Important for reducing fluoride concentration in the cell, thus reducing its toxicity. This is Fluoride-specific ion channel FluC from Nitratidesulfovibrio vulgaris (strain ATCC 29579 / DSM 644 / CCUG 34227 / NCIMB 8303 / VKM B-1760 / Hildenborough) (Desulfovibrio vulgaris).